Consider the following 274-residue polypeptide: Large ribosomal subunit protein uL2 (274 aa).

2 disordered regions span residues 35–60 (EPQH…GHKH) and 224–274 (VMNP…RRKK). Residues 50–60 (TTRHKGGGHKH) are compositionally biased toward basic residues. Basic and acidic residues predominate over residues 229–246 (DHPHGGGEGKTGEGRHAV).

The protein belongs to the universal ribosomal protein uL2 family. Part of the 50S ribosomal subunit. Forms a bridge to the 30S subunit in the 70S ribosome.

Its function is as follows. One of the primary rRNA binding proteins. Required for association of the 30S and 50S subunits to form the 70S ribosome, for tRNA binding and peptide bond formation. It has been suggested to have peptidyltransferase activity; this is somewhat controversial. Makes several contacts with the 16S rRNA in the 70S ribosome. This is Large ribosomal subunit protein uL2 from Delftia acidovorans (strain DSM 14801 / SPH-1).